A 705-amino-acid chain; its full sequence is Lethal(3)malignant brain tumor-like protein 2 (705 aa).

Positions 1 to 84 are disordered; sequence MEKPPSIEET…GTPRSLDGSG (84 aa). Phosphoserine is present on Ser13. Over residues 15-25 the composition is skewed to acidic residues; that stretch reads PMEEEEDDDLE. Residues 38–49 are compositionally biased toward low complexity; the sequence is SSVGSESSSYLE. Residues 50–60 show a composition bias toward acidic residues; that stretch reads ESSEAENEDRE. At Ser67 the chain carries Phosphoserine. Residue Thr76 is modified to Phosphothreonine. An FCS-type zinc finger spans residues 81-116; that stretch reads DGSGSEPAVCEMCGIVGTREAFFSKTKRFCSVSCSR. Residues Cys90, Cys93, Cys110, and Cys114 each contribute to the Zn(2+) site. MBT repeat units lie at residues 179–283, 291–391, 397–500, and 508–604; these read FDWG…LVPP, TDWK…IKMS, MAHH…LTPP, and FNWE…LQPP. Ser338 carries the phosphoserine modification. Lys405 is covalently cross-linked (Glycyl lysine isopeptide (Lys-Gly) (interchain with G-Cter in SUMO2)). A disordered region spans residues 608-705; it reads EPATPLKAKE…VENIKQETDD (98 aa). A compositionally biased stretch (basic residues) spans 619–634; the sequence is TKKKKKQFGKKRKRIP. Residues Lys647, Lys659, and Lys675 each participate in a glycyl lysine isopeptide (Lys-Gly) (interchain with G-Cter in SUMO2) cross-link. Phosphoserine is present on residues Ser683, Ser688, and Ser689. Lys700 is covalently cross-linked (Glycyl lysine isopeptide (Lys-Gly) (interchain with G-Cter in SUMO1); alternate). Residue Lys700 forms a Glycyl lysine isopeptide (Lys-Gly) (interchain with G-Cter in SUMO2); alternate linkage.

As to quaternary structure, part of the E2F6.com-1 complex in G0 phase composed of E2F6, MGA, MAX, TFDP1, CBX3, BAT8, EUHMTASE1, RING1, RNF2, MBLR, BAT8 and YAF2.

It is found in the nucleus. In terms of biological role, putative Polycomb group (PcG) protein. PcG proteins maintain the transcriptionally repressive state of genes, probably via a modification of chromatin, rendering it heritably changed in its expressibility. Its association with a chromatin-remodeling complex suggests that it may contribute to prevent expression of genes that trigger the cell into mitosis. Binds to monomethylated and dimethylated 'Lys-20' on histone H4. Binds histone H3 peptides that are monomethylated or dimethylated on 'Lys-4', 'Lys-9' or 'Lys-27'. The polypeptide is Lethal(3)malignant brain tumor-like protein 2 (L3MBTL2) (Pongo abelii (Sumatran orangutan)).